The chain runs to 449 residues: Histone PARylation factor 1-like (449 aa).

The CCHC-type zinc-finger motif lies at 3 to 28; the sequence is KEDCKYWDKCYQQNPAHLSKYNHPKK. The interval 18–93 is disordered; the sequence is AHLSKYNHPK…AKGSYEAETE (76 aa). 2 stretches are compositionally biased toward basic and acidic residues: residues 28–41 and 54–69; these read KQQEHEVDGAEGKK and EQKKEEQTEPVNKDKS. The residue at position 72 (S72) is a Phosphoserine. The active-site Proton donor is E384.

It belongs to the HPF1 family.

The protein localises to the chromosome. The protein resides in the nucleus. In terms of biological role, cofactor for serine ADP-ribosylation that confers serine specificity on Parp. Switches the amino acid specificity of Parp from aspartate or glutamate to serine residues. Acts by completing the active site of Parp: forms a composite active site composed of residues from HPF1/CG1218 and Parp. In Drosophila melanogaster (Fruit fly), this protein is Histone PARylation factor 1-like.